Consider the following 274-residue polypeptide: Octanoyltransferase LipM (274 aa).

In terms of domain architecture, BPL/LPL catalytic spans 32–244 (GEVPPTLRFY…GFARALGLTL (213 aa)). The active-site Acyl-thioester intermediate is the cysteine 146.

It belongs to the octanoyltransferase LipM family. In terms of assembly, monomer.

The enzyme catalyses octanoyl-[ACP] + L-lysyl-[protein] = N(6)-octanoyl-L-lysyl-[protein] + holo-[ACP] + H(+). It functions in the pathway protein modification; protein lipoylation via endogenous pathway; protein N(6)-(lipoyl)lysine from octanoyl-[acyl-carrier-protein]. Catalyzes the transfer of endogenously produced octanoic acid from octanoyl-acyl-carrier-protein onto the lipoyl domain of GcvH, an intermediate carrier during protein lipoylation. This is Octanoyltransferase LipM from Symbiobacterium thermophilum (strain DSM 24528 / JCM 14929 / IAM 14863 / T).